The primary structure comprises 125 residues: UPF0102 protein PA4424 (125 aa).

The protein belongs to the UPF0102 family.

In Pseudomonas aeruginosa (strain ATCC 15692 / DSM 22644 / CIP 104116 / JCM 14847 / LMG 12228 / 1C / PRS 101 / PAO1), this protein is UPF0102 protein PA4424.